The following is a 227-amino-acid chain: Enolase-phosphatase E1 (227 aa).

This sequence belongs to the HAD-like hydrolase superfamily. MasA/MtnC family. In terms of assembly, monomer. Mg(2+) is required as a cofactor.

It carries out the reaction 5-methylsulfanyl-2,3-dioxopentyl phosphate + H2O = 1,2-dihydroxy-5-(methylsulfanyl)pent-1-en-3-one + phosphate. The protein operates within amino-acid biosynthesis; L-methionine biosynthesis via salvage pathway; L-methionine from S-methyl-5-thio-alpha-D-ribose 1-phosphate: step 3/6. Its pathway is amino-acid biosynthesis; L-methionine biosynthesis via salvage pathway; L-methionine from S-methyl-5-thio-alpha-D-ribose 1-phosphate: step 4/6. In terms of biological role, bifunctional enzyme that catalyzes the enolization of 2,3-diketo-5-methylthiopentyl-1-phosphate (DK-MTP-1-P) into the intermediate 2-hydroxy-3-keto-5-methylthiopentenyl-1-phosphate (HK-MTPenyl-1-P), which is then dephosphorylated to form the acireductone 1,2-dihydroxy-3-keto-5-methylthiopentene (DHK-MTPene). This is Enolase-phosphatase E1 from Pseudomonas syringae pv. tomato (strain ATCC BAA-871 / DC3000).